We begin with the raw amino-acid sequence, 501 residues long: Glycerol kinase (501 aa).

Position 12 (threonine 12) interacts with ADP. ATP contacts are provided by threonine 12, threonine 13, and serine 14. Sn-glycerol 3-phosphate is bound at residue threonine 12. ADP is bound at residue arginine 16. Sn-glycerol 3-phosphate is bound by residues arginine 82, glutamate 83, tyrosine 135, and aspartate 244. Residues arginine 82, glutamate 83, tyrosine 135, aspartate 244, and glutamine 245 each contribute to the glycerol site. 4 residues coordinate ADP: threonine 266, glycine 309, glycine 409, and asparagine 413. Positions 266, 309, and 409 each coordinate ATP.

Belongs to the FGGY kinase family.

The enzyme catalyses glycerol + ATP = sn-glycerol 3-phosphate + ADP + H(+). It functions in the pathway polyol metabolism; glycerol degradation via glycerol kinase pathway; sn-glycerol 3-phosphate from glycerol: step 1/1. With respect to regulation, inhibited by fructose 1,6-bisphosphate (FBP). Functionally, key enzyme in the regulation of glycerol uptake and metabolism. Catalyzes the phosphorylation of glycerol to yield sn-glycerol 3-phosphate. This chain is Glycerol kinase, found in Coxiella burnetii (strain RSA 331 / Henzerling II).